An 829-amino-acid polypeptide reads, in one-letter code: Potassium voltage-gated channel unc-103 (829 aa).

Positions 1-76 (MKTAVFGRDS…PRASHSSRRT (76 aa)) are disordered. Residues 1–123 (MKTAVFGRDS…YSPFKAVWDW (123 aa)) are Cytoplasmic-facing. The segment covering 46 to 66 (GVSGTGGGGSGGLQGAPGAGG) has biased composition (gly residues). A helical membrane pass occupies residues 124–144 (IILLLVIYTAVFTPYVAAFLL). Topologically, residues 145 to 158 (RELQDTAKKSRFTE) are extracellular. The helical transmembrane segment at 159–179 (PLEIVDLIVDIMFIVDIIINF) threads the bilayer. The Cytoplasmic portion of the chain corresponds to 180–203 (RTTYVNENDEACQVVSDPGKIATH). Residues 204 to 224 (YFKGWFIIDMVAAVPFDLLLV) form a helical membrane-spanning segment. Residues 225–234 (STNSDETTTL) lie on the Extracellular side of the membrane. A helical; Voltage-sensor transmembrane segment spans residues 235–255 (IGLLKTARLLRLVRVARKLDR). At 256-261 (YSEYGA) the chain is on the cytoplasmic side. Residues 262 to 282 (AVLLLLMATFALIAHWLACIW) form a helical membrane-spanning segment. Over 283 to 327 (YAIGSAELSHKEYTWLHQLSKQLAQPYTSTNGTIPTGGPTLKSRY) the chain is Extracellular. Asparagine 313 carries N-linked (GlcNAc...) asparagine glycosylation. The segment at residues 328 to 348 (VTSLYFTLSTITSIGFGNVSA) is an intramembrane region (pore-forming). Topologically, residues 349–354 (TTDSEK) are extracellular. Residues 355–375 (IFTIIMMILGSLMYASVFGNV) traverse the membrane as a helical segment. The Cytoplasmic segment spans residues 376-829 (SAIIQRLYSG…TPTQETDTIL (454 aa)). 458 to 559 (AFAGSTPGCL…ILRDDLLDVL (102 aa)) is a binding site for a nucleoside 3',5'-cyclic phosphate. The tract at residues 601 to 674 (SMNKDRYTTP…PLLRRSTNHH (74 aa)) is disordered. Basic and acidic residues predominate over residues 603 to 615 (NKDRYTTPPDGDH). The span at 640-650 (SAGSRSSSRCS) shows a compositional bias: low complexity.

The protein belongs to the potassium channel family. H (Eag) (TC 1.A.1.20) subfamily. Kv11.1/KCNH2 sub-subfamily. The potassium channel is composed of a homo- or heterotetrameric complex. Interacts with dnj-1; dnj-1 chaperone promotes tetramerization.

The protein localises to the cell membrane. Pore-forming (alpha) subunit of voltage-gated inwardly rectifying potassium channel. Channel properties are modulated by cAMP and subunit assembly. Regulates the movements of the male's copulatory spicules before and during male mating behavior. In Caenorhabditis elegans, this protein is Potassium voltage-gated channel unc-103.